The chain runs to 1645 residues: Protein MON2 homolog (1645 aa).

Belongs to the MON2 family.

In terms of biological role, may be required for traffic between late Golgi and early endosomes. In Caenorhabditis briggsae, this protein is Protein MON2 homolog.